The following is a 240-amino-acid chain: Uridylate kinase (240 aa).

12–15 is a binding site for ATP; it reads KLSG. An involved in allosteric activation by GTP region spans residues 20–25; that stretch reads GSQGFG. Gly54 is a binding site for UMP. ATP is bound by residues Gly55 and Arg59. Residues Asp74 and 135–142 each bind UMP; that span reads TGNPYFST. Positions 168 and 171 each coordinate ATP.

It belongs to the UMP kinase family. In terms of assembly, homohexamer.

The protein localises to the cytoplasm. It carries out the reaction UMP + ATP = UDP + ADP. It functions in the pathway pyrimidine metabolism; CTP biosynthesis via de novo pathway; UDP from UMP (UMPK route): step 1/1. Its activity is regulated as follows. Allosterically activated by GTP. Inhibited by UTP. Catalyzes the reversible phosphorylation of UMP to UDP. This is Uridylate kinase from Desulfitobacterium hafniense (strain Y51).